Here is a 188-residue protein sequence, read N- to C-terminus: Peptide deformylase (188 aa).

Residues Cys-109 and His-152 each contribute to the Fe cation site. The active site involves Glu-153. His-156 contacts Fe cation.

Belongs to the polypeptide deformylase family. Fe(2+) is required as a cofactor.

The catalysed reaction is N-terminal N-formyl-L-methionyl-[peptide] + H2O = N-terminal L-methionyl-[peptide] + formate. In terms of biological role, removes the formyl group from the N-terminal Met of newly synthesized proteins. Requires at least a dipeptide for an efficient rate of reaction. N-terminal L-methionine is a prerequisite for activity but the enzyme has broad specificity at other positions. This Chloroflexus aggregans (strain MD-66 / DSM 9485) protein is Peptide deformylase.